The primary structure comprises 338 residues: Limbic system-associated membrane protein (338 aa).

An N-terminal signal peptide occupies residues 1 to 28 (MVGRVQPDRKQLPLVLLRLLCLLPTGLP). 3 consecutive Ig-like C2-type domains span residues 29 to 122 (VRSV…PKTS), 132 to 214 (PKIS…VKVT), and 219 to 304 (PTIT…ASLV). N-linked (GlcNAc...) asparagine glycans are attached at residues asparagine 40 and asparagine 66. A disulfide bond links cysteine 53 and cysteine 111. Tyrosine 94 bears the Phosphotyrosine mark. Asparagine 136 and asparagine 148 each carry an N-linked (GlcNAc...) asparagine glycan. 2 cysteine pairs are disulfide-bonded: cysteine 153/cysteine 197 and cysteine 239/cysteine 290. Residues asparagine 279, asparagine 287, and asparagine 300 are each glycosylated (N-linked (GlcNAc...) asparagine). The GPI-anchor amidated asparagine; alternate moiety is linked to residue asparagine 315. Asparagine 315 is a glycosylation site (N-linked (GlcNAc...) asparagine; alternate). A propeptide spans 316 to 338 (GSISLAVPLWLLAASLFCLLSKC) (removed in mature form).

The protein belongs to the immunoglobulin superfamily. IgLON family. As to expression, expressed mostly by neurons comprising limbic-associated cortical and subcortical regions that function in cognition, emotion, memory, and learning.

It is found in the cell membrane. In terms of biological role, mediates selective neuronal growth and axon targeting. Contributes to the guidance of developing axons and remodeling of mature circuits in the limbic system. Essential for normal growth of the hippocampal mossy fiber projection. This is Limbic system-associated membrane protein (Lsamp) from Rattus norvegicus (Rat).